The primary structure comprises 134 residues: Small ribosomal subunit protein uS11 (134 aa).

The disordered stretch occupies residues 114–134 (DVTPVPSDSTRRKGGRRGRRL). Over residues 125–134 (RKGGRRGRRL) the composition is skewed to basic residues.

This sequence belongs to the universal ribosomal protein uS11 family.

This is Small ribosomal subunit protein uS11 (RPS14) from Candida albicans (Yeast).